The chain runs to 184 residues: Large ribosomal subunit protein uL6 (184 aa).

The protein belongs to the universal ribosomal protein uL6 family. As to quaternary structure, part of the 50S ribosomal subunit.

This protein binds to the 23S rRNA, and is important in its secondary structure. It is located near the subunit interface in the base of the L7/L12 stalk, and near the tRNA binding site of the peptidyltransferase center. This Pyrococcus furiosus (strain ATCC 43587 / DSM 3638 / JCM 8422 / Vc1) protein is Large ribosomal subunit protein uL6.